Here is a 341-residue protein sequence, read N- to C-terminus: Ketol-acid reductoisomerase (NADP(+)) (341 aa).

Positions 2–182 constitute a KARI N-terminal Rossmann domain; sequence AKIYYNDDAD…GGTRAGVIET (181 aa). NADP(+)-binding positions include 25-28, S51, S53, and 83-86; these read YGSQ and DQVQ. Residue H108 is part of the active site. G134 is an NADP(+) binding site. The KARI C-terminal knotted domain maps to 183–328; it reads TFTEETESDL…RKLRSLFAWE (146 aa). Mg(2+) is bound by residues D191, E195, E227, and E231. S252 contributes to the substrate binding site.

The protein belongs to the ketol-acid reductoisomerase family. Requires Mg(2+) as cofactor.

It carries out the reaction (2R)-2,3-dihydroxy-3-methylbutanoate + NADP(+) = (2S)-2-acetolactate + NADPH + H(+). The catalysed reaction is (2R,3R)-2,3-dihydroxy-3-methylpentanoate + NADP(+) = (S)-2-ethyl-2-hydroxy-3-oxobutanoate + NADPH + H(+). Its pathway is amino-acid biosynthesis; L-isoleucine biosynthesis; L-isoleucine from 2-oxobutanoate: step 2/4. It participates in amino-acid biosynthesis; L-valine biosynthesis; L-valine from pyruvate: step 2/4. In terms of biological role, involved in the biosynthesis of branched-chain amino acids (BCAA). Catalyzes an alkyl-migration followed by a ketol-acid reduction of (S)-2-acetolactate (S2AL) to yield (R)-2,3-dihydroxy-isovalerate. In the isomerase reaction, S2AL is rearranged via a Mg-dependent methyl migration to produce 3-hydroxy-3-methyl-2-ketobutyrate (HMKB). In the reductase reaction, this 2-ketoacid undergoes a metal-dependent reduction by NADPH to yield (R)-2,3-dihydroxy-isovalerate. The protein is Ketol-acid reductoisomerase (NADP(+)) of Kocuria rhizophila (strain ATCC 9341 / DSM 348 / NBRC 103217 / DC2201).